The primary structure comprises 333 residues: L-lactate dehydrogenase A chain (333 aa).

Residues 30–58 and Arg100 contribute to the NAD(+) site; that span reads GMVGMAAAISILLKDLTDELALVDVMEDK. 3 residues coordinate substrate: Arg107, Asn139, and Arg170. Residue Asn139 participates in NAD(+) binding. His194 acts as the Proton acceptor in catalysis. Thr249 contacts substrate.

It belongs to the LDH/MDH superfamily. LDH family. In terms of assembly, homotetramer.

It is found in the cytoplasm. It carries out the reaction (S)-lactate + NAD(+) = pyruvate + NADH + H(+). It participates in fermentation; pyruvate fermentation to lactate; (S)-lactate from pyruvate: step 1/1. This chain is L-lactate dehydrogenase A chain (ldha), found in Cyprinus carpio (Common carp).